Consider the following 243-residue polypeptide: UPF0246 protein SpyM3_1790 (243 aa).

Belongs to the UPF0246 family.

The protein is UPF0246 protein SpyM3_1790 of Streptococcus pyogenes serotype M3 (strain ATCC BAA-595 / MGAS315).